Reading from the N-terminus, the 341-residue chain is S-adenosylmethionine:tRNA ribosyltransferase-isomerase (341 aa).

It belongs to the QueA family. Monomer.

It localises to the cytoplasm. The enzyme catalyses 7-aminomethyl-7-carbaguanosine(34) in tRNA + S-adenosyl-L-methionine = epoxyqueuosine(34) in tRNA + adenine + L-methionine + 2 H(+). It participates in tRNA modification; tRNA-queuosine biosynthesis. Its function is as follows. Transfers and isomerizes the ribose moiety from AdoMet to the 7-aminomethyl group of 7-deazaguanine (preQ1-tRNA) to give epoxyqueuosine (oQ-tRNA). The chain is S-adenosylmethionine:tRNA ribosyltransferase-isomerase from Chlorobium phaeovibrioides (strain DSM 265 / 1930) (Prosthecochloris vibrioformis (strain DSM 265)).